Reading from the N-terminus, the 244-residue chain is tRNA (guanine-N(1)-)-methyltransferase (244 aa).

S-adenosyl-L-methionine is bound by residues glycine 112 and isoleucine 131–valine 136.

This sequence belongs to the RNA methyltransferase TrmD family. As to quaternary structure, homodimer.

The protein resides in the cytoplasm. The catalysed reaction is guanosine(37) in tRNA + S-adenosyl-L-methionine = N(1)-methylguanosine(37) in tRNA + S-adenosyl-L-homocysteine + H(+). Specifically methylates guanosine-37 in various tRNAs. In Clostridium kluyveri (strain NBRC 12016), this protein is tRNA (guanine-N(1)-)-methyltransferase.